The chain runs to 369 residues: MNDETTPANKNPEKAELRCGWTTGACATAATKAALTALITGEFPDPVGIILPKGEVPYFQLAYEGLGEGYAMAGIVKDAGDDPDVTHGATIISTVYPAPPGTGIIFRAGEGVGTVTREGLAIPPPGEAAINPVPRRMMTEICEAICAEYGLPADLVITISVPGGEEIAQKTWNPRLGIIGGISILGTTGVVHPFSCSAWIHSIHRGIDVARAAGQKHVLGATGSTSEDAAQALYNLPDFAILDMGDFAGGVLKYLREHPIDRLTIAGGFAKLTKLAQGALDLHSSRSQVDKGFLWQIAERAGAPADMKERILLANTAMEVLELTQSIGIDIAGPIALEARQTALKTLRGAPVEVEIIVTDRKGNILARV.

Belongs to the CbiD family.

The enzyme catalyses Co-precorrin-5B + S-adenosyl-L-methionine = Co-precorrin-6A + S-adenosyl-L-homocysteine. It participates in cofactor biosynthesis; adenosylcobalamin biosynthesis; cob(II)yrinate a,c-diamide from sirohydrochlorin (anaerobic route): step 6/10. In terms of biological role, catalyzes the methylation of C-1 in cobalt-precorrin-5B to form cobalt-precorrin-6A. This is Cobalt-precorrin-5B C(1)-methyltransferase from Brucella melitensis biotype 1 (strain ATCC 23456 / CCUG 17765 / NCTC 10094 / 16M).